Consider the following 446-residue polypeptide: T-box transcription factor TBX19 (446 aa).

The segment at residues 43-216 (LEDAPLWQRF…YNPFAKAFLD (174 aa)) is a DNA-binding region (T-box).

Its subcellular location is the nucleus. Transcriptional regulator involved in developmental processes. Can activate POMC gene expression and repress the alpha glycoprotein subunit and thyroid-stimulating hormone beta promoters. In Mus musculus (Mouse), this protein is T-box transcription factor TBX19.